Reading from the N-terminus, the 135-residue chain is Galectin-1 (135 aa).

A2 is modified (N-acetylalanine). Residues 4 to 135 (GLVASNLNLK…DFKIKCVAFE (132 aa)) enclose the Galectin domain. Residues K13 and K29 each carry the N6-acetyllysine modification. S30 bears the Phosphoserine mark. Residues 45 to 49 (HFNPR), H53, N62, and 69 to 72 (WGAE) contribute to the a beta-D-galactoside site. An N6-acetyllysine; alternate modification is found at K108. At K108 the chain carries N6-succinyllysine; alternate. K128 is modified (N6-acetyllysine).

Homodimer. Binds LGALS3BP. Interacts with CD2, CD3, CD4, CD6, CD7, CD43, ALCAM and CD45. Interacts with laminin (via poly-N-acetyllactosamine). Interacts with SUSD2. Interacts with cargo receptor TMED10; the interaction mediates the translocation from the cytoplasm into the ERGIC (endoplasmic reticulum-Golgi intermediate compartment) and thereby secretion.

The protein localises to the secreted. It localises to the extracellular space. Its subcellular location is the extracellular matrix. It is found in the cytoplasm. Lectin that binds beta-galactoside and a wide array of complex carbohydrates. Plays a role in regulating apoptosis, cell proliferation and cell differentiation. Inhibits CD45 protein phosphatase activity and therefore the dephosphorylation of Lyn kinase. Strong inducer of T-cell apoptosis. This is Galectin-1 (LGALS1) from Bos taurus (Bovine).